The chain runs to 349 residues: Draxin (349 aa).

The signal sequence occupies residues 1 to 25 (MAGPAIHTAPMLFLVLLLPLELSLA). Disordered regions lie at residues 38–79 (PENH…QDGA), 118–145 (PYPE…RRDR), and 244–273 (DGWP…EGEP). A compositionally biased stretch (basic and acidic residues) spans 120–131 (PEKENRPPGWER). Composition is skewed to basic residues over residues 132-145 (TRKR…RRDR) and 249-258 (AKKKEKHRGK). N-linked (GlcNAc...) asparagine glycosylation occurs at Asn-264.

This sequence belongs to the draxin family. As to quaternary structure, interacts with LRP6.

The protein resides in the secreted. Chemorepulsive axon guidance protein required for the development of spinal cord and forebrain commissures. Acts as a chemorepulsive guidance protein for commissural axons during development. Able to inhibit or repel neurite outgrowth from dorsal spinal cord. Inhibits the stabilization of cytosolic beta-catenin (CTNNB1) via its interaction with LRP6, thereby acting as an antagonist of Wnt signaling pathway. This is Draxin from Homo sapiens (Human).